The sequence spans 579 residues: ERV-BabFcenv provirus ancestral Env polyprotein (579 aa).

The first 22 residues, 1 to 22 (MISAVLNLPSTPLLPLLWFTLI), serve as a signal peptide directing secretion. The tract at residues 23 to 387 (IPASLTNPKF…LSSSNNIQKQ (365 aa)) is surface protein. At 23–523 (IPASLTNPKF…VWLLPVVQQM (501 aa)) the chain is on the extracellular side. N-linked (GlcNAc...) asparagine glycosylation is found at N135, N203, N242, and N251. Positions 255 to 258 (CFLC) match the CXXC motif. Residues N276, N312, and N337 are each glycosylated (N-linked (GlcNAc...) asparagine). A fusion peptide region spans residues 388 to 408 (AVFLPLIIGVSLASSLVASGL). The transmembrane protein stretch occupies residues 388-579 (AVFLPLIIGV…LPTSDPNYAP (192 aa)). Positions 453 to 469 (AQNRRALDLLTAEKGGT) match the CKS-17 motif. C470 and C477 are disulfide-bonded. Positions 470–478 (CLFLGEECC) match the CX6CC motif. An N-linked (GlcNAc...) asparagine glycan is attached at N482. A helical transmembrane segment spans residues 524-544 (LPFLIPILILCLMLCLAPILI). Residues 545–579 (KFLRARVQEITRVTFNQMLLHPYTQLPTSDPNYAP) are Cytoplasmic-facing.

Belongs to the gamma type-C retroviral envelope protein family. HERV class-I F(c)1 env subfamily. In terms of processing, specific enzymatic cleavages in vivo yield the mature SU and TM proteins. Post-translationally, the CXXC motif is highly conserved across a broad range of retroviral envelope proteins. It is thought to participate in the formation of a labile disulfide bond possibly with the CX6CC motif present in the transmembrane domain.

The protein localises to the cell membrane. Functionally, retroviral envelope proteins mediate receptor recognition and membrane fusion during early infection. Endogenous envelope proteins may have kept, lost or modified their original function during evolution. The chain is ERV-BabFcenv provirus ancestral Env polyprotein from Papio anubis (Olive baboon).